The sequence spans 544 residues: Methyl-accepting chemotaxis protein McpP (544 aa).

3 consecutive transmembrane segments (helical) span residues 12–32, 50–70, and 192–212; these read RLWLILVVAVAMLVVLGLLML, VVQTAAGVLAYYQGLEAAGTL, and DASLVGVGIALLMALVVMLIA. An HAMP domain is found at 213-267; that stretch reads RSIARPLQEAVQAMGNIASGESDLTRRLDTHGSDEITHLGEHFNRFNGKLQGVVG. The Methyl-accepting transducer domain maps to 272 to 508; that stretch reads AAHALAQSAG…EINRNVLDTA (237 aa).

The protein belongs to the methyl-accepting chemotaxis (MCP) protein family.

The protein localises to the cell membrane. Chemotactic-signal transducers respond to changes in the concentration of attractants and repellents in the environment, transduce a signal from the outside to the inside of the cell, and facilitate sensory adaptation through the variation of the level of methylation. McpP is a chemoreceptor that responds specifically to some C2 and C3 carboxylic acids. Recognizes acetate, pyruvate, propionate, and L-lactate. The chain is Methyl-accepting chemotaxis protein McpP from Pseudomonas putida (strain ATCC 47054 / DSM 6125 / CFBP 8728 / NCIMB 11950 / KT2440).